A 393-amino-acid chain; its full sequence is Sugar efflux transporter B (393 aa).

12 helical membrane passes run 13-33, 51-71, 82-102, 106-126, 152-172, 174-194, 219-239, 253-273, 283-303, 306-326, 344-364, and 366-386; these read FDLT…AGAL, AMVG…SQFL, KSLI…FAWN, FVLL…NPQM, VSLA…GFSF, VMYL…WLFL, LLLF…IINM, LAGV…LIAG, FLMR…LMAH, VILL…GGIG, LYTN…GIVA, and IWNY…TLFC.

Belongs to the major facilitator superfamily. Set transporter family.

The protein localises to the cell inner membrane. Involved in the efflux of sugars. The physiological role may be the detoxification of non-metabolizable sugar analogs. Can transport lactose and glucose. The protein is Sugar efflux transporter B (setB) of Escherichia coli (strain K12).